The primary structure comprises 112 residues: Outer membrane protein assembly factor BamE (112 aa).

The signal sequence occupies residues 1–19 (MRCKTLTAAAAVLLMLTAG). Residue Cys20 is the site of N-palmitoyl cysteine attachment. Residue Cys20 is the site of S-diacylglycerol cysteine attachment.

This sequence belongs to the BamE family. Part of the Bam complex, which is composed of the outer membrane protein BamA, and four lipoproteins BamB, BamC, BamD and BamE.

It is found in the cell outer membrane. In terms of biological role, part of the outer membrane protein assembly complex, which is involved in assembly and insertion of beta-barrel proteins into the outer membrane. The polypeptide is Outer membrane protein assembly factor BamE (Salmonella typhimurium (strain LT2 / SGSC1412 / ATCC 700720)).